Consider the following 318-residue polypeptide: Dimethyladenosine transferase (318 aa).

H37, L39, G64, E85, D113, and N128 together coordinate S-adenosyl-L-methionine.

It belongs to the class I-like SAM-binding methyltransferase superfamily. rRNA adenine N(6)-methyltransferase family.

It is found in the cytoplasm. The protein resides in the nucleus. Its subcellular location is the nucleolus. The enzyme catalyses adenosine(1779)/adenosine(1780) in 18S rRNA + 4 S-adenosyl-L-methionine = N(6)-dimethyladenosine(1779)/N(6)-dimethyladenosine(1780) in 18S rRNA + 4 S-adenosyl-L-homocysteine + 4 H(+). Its function is as follows. Specifically dimethylates two adjacent adenosines in the loop of a conserved hairpin near the 3'-end of 18S rRNA in the 40S particle. This Saccharomyces cerevisiae (strain ATCC 204508 / S288c) (Baker's yeast) protein is Dimethyladenosine transferase.